We begin with the raw amino-acid sequence, 732 residues long: Guanylate cyclase soluble subunit alpha-2 (732 aa).

The segment at 1–58 is disordered; sequence MSRRKISSESFSSLGSDYLETSPEEEGECPLSRLCWNGSRSPPGPLEPSPAAAAAAAA. A compositionally biased stretch (low complexity) spans 49 to 58; that stretch reads SPAAAAAAAA. The 128-residue stretch at 521–648 folds into the Guanylate cyclase domain; the sequence is TMLFSDIVGF…NNVTLASKFE (128 aa).

This sequence belongs to the adenylyl cyclase class-4/guanylyl cyclase family. As to quaternary structure, heterodimer of an alpha and a beta chain. In terms of tissue distribution, isoform 1 is expressed in fetal brain, liver, colon, endothelium and testis. Isoform 2 is expressed only in liver, colon and endothelium.

The protein localises to the cytoplasm. It catalyses the reaction GTP = 3',5'-cyclic GMP + diphosphate. Activated by nitric oxide in the presence of magnesium or manganese ions. Functionally, has guanylyl cyclase on binding to the beta-1 subunit. Isoform 2 acts as a negative regulator of guanylyl cyclase activity as it forms non-functional heterodimers with the beta subunits. This Homo sapiens (Human) protein is Guanylate cyclase soluble subunit alpha-2 (GUCY1A2).